The sequence spans 1054 residues: Cell wall acid trehalase ARB_03719 (1054 aa).

Positions 1 to 24 (MKQPNINLAACILWLLSIITAVAA) are cleaved as a signal peptide. Residues asparagine 138, asparagine 178, asparagine 183, asparagine 207, asparagine 239, asparagine 277, and asparagine 309 are each glycosylated (N-linked (GlcNAc...) asparagine). 450–451 (WD) lines the substrate pocket. 4 N-linked (GlcNAc...) asparagine glycosylation sites follow: asparagine 495, asparagine 515, asparagine 572, and asparagine 580. The active-site Proton donor is glutamate 586. 2 N-linked (GlcNAc...) asparagine glycosylation sites follow: asparagine 620 and asparagine 648. 654–655 (KQ) contacts substrate. N-linked (GlcNAc...) asparagine glycosylation is found at asparagine 808 and asparagine 844. Residues 950–974 (PLHPVTDPENGDASGSSPTTPASSV) form a disordered region. Over residues 962–974 (ASGSSPTTPASSV) the composition is skewed to low complexity. Residues asparagine 1004, asparagine 1007, and asparagine 1039 are each glycosylated (N-linked (GlcNAc...) asparagine).

This sequence belongs to the glycosyl hydrolase 65 family.

It is found in the secreted. The protein localises to the cell wall. It carries out the reaction alpha,alpha-trehalose + H2O = alpha-D-glucose + beta-D-glucose. Functionally, cell wall acid trehalase that catalyzes hydrolysis of the disaccharide trehalose and required for growth on trehalose as carbon source. Plays a role in virulence. The sequence is that of Cell wall acid trehalase ARB_03719 from Arthroderma benhamiae (strain ATCC MYA-4681 / CBS 112371) (Trichophyton mentagrophytes).